The primary structure comprises 455 residues: Nucleoside-triphosphatase (455 aa).

Glu-168 functions as the Proton acceptor in the catalytic mechanism.

It belongs to the GDA1/CD39 NTPase family.

It localises to the nucleus. It catalyses the reaction a ribonucleoside 5'-triphosphate + H2O = a ribonucleoside 5'-diphosphate + phosphate + H(+). Its function is as follows. Might be involved in RNA transport out of nuclei. This Pisum sativum (Garden pea) protein is Nucleoside-triphosphatase.